Consider the following 210-residue polypeptide: Imidazole glycerol phosphate synthase subunit HisH (210 aa).

The 206-residue stretch at Pro3–Ala208 folds into the Glutamine amidotransferase type-1 domain. Cys81 acts as the Nucleophile in catalysis. Residues His183 and Glu185 contribute to the active site.

In terms of assembly, heterodimer of HisH and HisF.

It is found in the cytoplasm. It catalyses the reaction 5-[(5-phospho-1-deoxy-D-ribulos-1-ylimino)methylamino]-1-(5-phospho-beta-D-ribosyl)imidazole-4-carboxamide + L-glutamine = D-erythro-1-(imidazol-4-yl)glycerol 3-phosphate + 5-amino-1-(5-phospho-beta-D-ribosyl)imidazole-4-carboxamide + L-glutamate + H(+). The catalysed reaction is L-glutamine + H2O = L-glutamate + NH4(+). It participates in amino-acid biosynthesis; L-histidine biosynthesis; L-histidine from 5-phospho-alpha-D-ribose 1-diphosphate: step 5/9. Functionally, IGPS catalyzes the conversion of PRFAR and glutamine to IGP, AICAR and glutamate. The HisH subunit catalyzes the hydrolysis of glutamine to glutamate and ammonia as part of the synthesis of IGP and AICAR. The resulting ammonia molecule is channeled to the active site of HisF. The polypeptide is Imidazole glycerol phosphate synthase subunit HisH (Moorella thermoacetica (strain ATCC 39073 / JCM 9320)).